The primary structure comprises 618 residues: ELMO domain-containing protein C (618 aa).

Residues 1 to 72 adopt a coiled-coil conformation; the sequence is MERYRIRRER…EELRLQGDRF (72 aa). Disordered regions lie at residues 153–175 and 245–276; these read NFDN…KPSL and TTTT…STTV. 2 stretches are compositionally biased toward low complexity: residues 156-171 and 245-275; these read NNNN…NNGN and TTTT…SSTT. In terms of domain architecture, ELMO spans 382 to 545; it reads DHEEYLKHLW…KLKSQLNEIS (164 aa). Low complexity-rich tracts occupy residues 574 to 592 and 602 to 618; these read QQQQ…PSSP and TTTS…TQNN. Residues 574–618 form a disordered region; that stretch reads QQQQQLQQQQQSLPLPSSPRSFLNNYQQTTTSSTSISPSKNTQNN.

This chain is ELMO domain-containing protein C (elmoC), found in Dictyostelium discoideum (Social amoeba).